The sequence spans 500 residues: Probable cytochrome P450 514A2 (500 aa).

The helical transmembrane segment at 4–24 threads the bilayer; the sequence is IYTIILTIIILVLIISIKDLF. Residue Cys-446 participates in heme binding.

The protein belongs to the cytochrome P450 family. Requires heme as cofactor.

The protein resides in the membrane. The chain is Probable cytochrome P450 514A2 (cyp514A2) from Dictyostelium discoideum (Social amoeba).